The following is a 967-amino-acid chain: Leucine--tRNA ligase (967 aa).

Residues 43-53 (PYLSGHLHVGH) carry the 'HIGH' region motif. A 'KMSKS' region motif is present at residues 650–654 (KMSKS). Lys653 contributes to the ATP binding site.

It belongs to the class-I aminoacyl-tRNA synthetase family.

The protein localises to the cytoplasm. It carries out the reaction tRNA(Leu) + L-leucine + ATP = L-leucyl-tRNA(Leu) + AMP + diphosphate. This is Leucine--tRNA ligase from Thermococcus onnurineus (strain NA1).